We begin with the raw amino-acid sequence, 2617 residues long: Non-reducing polyketide synthase epaA (2617 aa).

The segment at 95 to 231 is N-terminal acylcarrier protein transacylase domain (SAT); that stretch reads PNILLSPMVV…AARSISSLQQ (137 aa). Residue Cys-132 is the Nucleophile; for transacylase activity of the active site. The active-site Proton donor/acceptor; for transacylase activity is His-250. The 419-residue stretch at 372-790 folds into the Ketosynthase family 3 (KS3) domain; it reads PNEIAVIGMS…GSNASMVVAQ (419 aa). Catalysis depends on for beta-ketoacyl synthase activity residues Cys-539, His-674, and His-713. Residues 902 to 1193 form a malonyl-CoA:ACP transacylase (MAT) domain region; that stretch reads FGGQISNYVG…ITSMASRALG (292 aa). The tract at residues 1282 to 1413 is N-terminal hotdog fold; that stretch reads PKTLWSLIEA…GKLAFLSGQD (132 aa). The 310-residue stretch at 1282–1591 folds into the PKS/mFAS DH domain; sequence PKTLWSLIEA…YHKVAKASMS (310 aa). The product template (PT) domain stretch occupies residues 1310–1589; the sequence is LVSGHVIANT…INYHKVAKAS (280 aa). The Proton acceptor; for dehydratase activity role is filled by His-1314. The tract at residues 1443–1591 is C-terminal hotdog fold; it reads ADDIIQGRNI…YHKVAKASMS (149 aa). Residue Asp-1499 is the Proton donor; for dehydratase activity of the active site. The segment at 1600 to 1651 is disordered; the sequence is TEAAPSSSTRAHPTSSSSPRLPGPSVPEDKSQNETQPAGTNAVAKKKSEKSA. A compositionally biased stretch (low complexity) spans 1602-1619; the sequence is AAPSSSTRAHPTSSSSPR. The region spanning 1653–1727 is the Carrier domain; it reads QNVLEKTRAL…GLVEYVQSAV (75 aa). At Ser-1687 the chain carries O-(pantetheine 4'-phosphoryl)serine. Residues 1728 to 1799 form a disordered region; that stretch reads GVPTNGDEPD…PAMPPASSKT (72 aa). Low complexity predominate over residues 1750–1766; the sequence is LAPSPSSSSSSTNLTED. Over residues 1769–1785 the composition is skewed to polar residues; sequence LDQAETTTNISSYPGQT. The methyltransferase domain stretch occupies residues 1970–2158; the sequence is DSLLNKLSYR…VGYGQVDWTD (189 aa). Residues 2240–2485 form an NADPH-binding (R) domain region; sequence ITGATGSLGV…LCWTPVNDVA (246 aa).

Requires pantetheine 4'-phosphate as cofactor.

The protein operates within secondary metabolite biosynthesis. Non-reducing polyketide synthase; part of the gene cluster that mediates the biosynthesis of nigerpyrone and its derivatives carbonarone A and pestalamide A. The biosynthesis pathway begins with the polyketide assembly by epaA to form phenylacetyl triketide precursor from successive condensation of two malonyl-CoA, presumably with one phenylacetyl-CoA starter unit produced by the phenylacetyl-CoA ligase epaB. For the nigerpyrone biosynthesis, the reactive polyketide chain is released as an aldehyde through the R-domain. A nonenzymatic cyclization and dehydration may create nigerpyrone. For the biosynthesis of carbonarone A and pestalamide A, an extra methyl group is added through the C-methyltransferase domain. Several further steps involving the dehydrogenase orf1, the cytochrome P450 monooxygenase orf2 and the FAD-dependent monooxygenase orf3 are required to form a carbonarone A precursor which is converted to carbonarone A via cyclization. The O-acetyltransferase epaC could catalyze the transfer of 2-methylsuccinyl-CoA, a common intermediate in the ethylmalonyl-CoA pathway, to generate the final product pestalamide A. The sequence is that of Non-reducing polyketide synthase epaA from Aspergillus niger (strain ATCC MYA-4892 / CBS 513.88 / FGSC A1513).